We begin with the raw amino-acid sequence, 232 residues long: Zinc finger protein RTS2 (232 aa).

The C2H2-type zinc finger occupies 24–48 (YYCQICQRQCKDANGFQSHNKSPSH). Disordered stretches follow at residues 180–199 (AKRQTEKVYQPEMKSEISGD) and 211–232 (GNGRVNKKKKKVPPRKDGIKFR).

It is found in the nucleus. The polypeptide is Zinc finger protein RTS2 (RTS2) (Saccharomyces cerevisiae (strain ATCC 204508 / S288c) (Baker's yeast)).